A 230-amino-acid polypeptide reads, in one-letter code: Small ribosomal subunit protein uS3 (230 aa).

Residues 39-107 form the KH type-2 domain; sequence VRKFLVEKLQ…PAQINIAEIR (69 aa).

Belongs to the universal ribosomal protein uS3 family. Part of the 30S ribosomal subunit. Forms a tight complex with proteins S10 and S14.

Functionally, binds the lower part of the 30S subunit head. Binds mRNA in the 70S ribosome, positioning it for translation. The protein is Small ribosomal subunit protein uS3 of Shewanella putrefaciens (strain CN-32 / ATCC BAA-453).